Reading from the N-terminus, the 249-residue chain is Triosephosphate isomerase (249 aa).

Substrate is bound at residue 9-11 (NWK). Residue His-91 is the Electrophile of the active site. The Proton acceptor role is filled by Glu-163. Substrate contacts are provided by residues Gly-169, Ser-209, and 230–231 (GG).

Belongs to the triosephosphate isomerase family. As to quaternary structure, homodimer.

The protein resides in the cytoplasm. The catalysed reaction is D-glyceraldehyde 3-phosphate = dihydroxyacetone phosphate. Its pathway is carbohydrate biosynthesis; gluconeogenesis. It functions in the pathway carbohydrate degradation; glycolysis; D-glyceraldehyde 3-phosphate from glycerone phosphate: step 1/1. In terms of biological role, involved in the gluconeogenesis. Catalyzes stereospecifically the conversion of dihydroxyacetone phosphate (DHAP) to D-glyceraldehyde-3-phosphate (G3P). This chain is Triosephosphate isomerase, found in Halorhodospira halophila (strain DSM 244 / SL1) (Ectothiorhodospira halophila (strain DSM 244 / SL1)).